We begin with the raw amino-acid sequence, 808 residues long: Spindle assembly abnormal protein 4 (808 aa).

Positions 1–151 (MASDENIGAD…PDEPSTLVNS (151 aa)) are disordered. Positions 42-54 (PPTSELSSASSPS) are enriched in low complexity. 2 stretches are compositionally biased toward polar residues: residues 61 to 78 (SLSN…SGIS) and 85 to 104 (PPTT…SPEN). Residues 113–123 (AEEHGHSGQHA) are compositionally biased toward basic and acidic residues. Residues 124–133 (EEEEDNDTDE) show a composition bias toward acidic residues. Positions 161 to 181 (KYKNAAAEFKAFERRMDSMRS) form a coiled coil. 2 disordered regions span residues 187–206 (TSLA…PPTR) and 271–298 (VTAP…DENR). Over residues 280–294 (MMNSSRQNPQNGNVQ) the composition is skewed to polar residues. Residues 314 to 503 (LDRQKLEIEI…ERDDKEKEMF (190 aa)) are a coiled coil. Positions 511–529 (KTSNPVPPVLNQSVPISIT) are enriched in polar residues. Residues 511–564 (KTSNPVPPVLNQSVPISITSNGPSRHPSSSSLTTFRKPSTSNRERGVSWADEPN) are disordered. The span at 530–541 (SNGPSRHPSSSS) shows a compositional bias: low complexity. The span at 542–551 (LTTFRKPSTS) shows a compositional bias: polar residues.

In terms of assembly, interacts with hyls-1; leading to hyls-1 localization into newly forming centrioles.

The protein resides in the cytoplasm. It is found in the cytoskeleton. It localises to the microtubule organizing center. Its subcellular location is the centrosome. Functionally, required for centrosome duplication. Plays a central role in determining centrosome size. This is Spindle assembly abnormal protein 4 (sas-4) from Caenorhabditis elegans.